We begin with the raw amino-acid sequence, 166 residues long: Large ribosomal subunit protein uL10 (166 aa).

The protein belongs to the universal ribosomal protein uL10 family. Part of the ribosomal stalk of the 50S ribosomal subunit. The N-terminus interacts with L11 and the large rRNA to form the base of the stalk. The C-terminus forms an elongated spine to which L12 dimers bind in a sequential fashion forming a multimeric L10(L12)X complex.

Its function is as follows. Forms part of the ribosomal stalk, playing a central role in the interaction of the ribosome with GTP-bound translation factors. The chain is Large ribosomal subunit protein uL10 from Streptococcus gordonii (strain Challis / ATCC 35105 / BCRC 15272 / CH1 / DL1 / V288).